The sequence spans 230 residues: Acetyltransferase (230 aa).

In terms of domain architecture, N-acetyltransferase spans R143 to T230.

It participates in mycotoxin biosynthesis. Functionally, acetyltransferase; part of the satratoxin SC3 cluster involved in the biosynthesis of satratoxins, trichothecene mycotoxins that are associated with human food poisonings. Satratoxins are suggested to be made by products of multiple gene clusters (SC1, SC2 and SC3) that encode 21 proteins in all, including polyketide synthases, acetyltransferases, and other enzymes expected to modify the trichothecene skeleton. SC1 encodes 10 proteins, SAT1 to SAT10. The largest are SAT8, which encodes a putative polyketide synthase (PKS) with a conventional non-reducing architecture, and SAT10, a putative protein containing four ankyrin repeats and thus may be involved in protein scaffolding. The putative short-chain reductase SAT3 may assist the PKS in some capacity. SAT6 contains a secretory lipase domain and acts probably as a trichothecene esterase. SAT5 encodes a putative acetyltransferase, and so, with SAT6, may affect endogenous protection from toxicity. The probable transcription factor SAT9 may regulate the expression of the SC1 cluster. SC2 encodes proteins SAT11 to SAT16, the largest of which encodes the putative reducing PKS SAT13. SAT11 is a cytochrome P450 monooxygenase, while SAT14 and SAT16 are probable acetyltransferases. The SC2 cluster may be regulated by the transcription factor SAT15. SC3 is a small cluster that encodes 5 proteins, SAT17 to SAT21. SAT21 is a putative MFS-type transporter which may have a role in exporting secondary metabolites. The four other proteins putatively encoded in SC3 include the taurine hydroxylase-like protein SAT17, the O-methyltransferase SAT18, the acetyltransferase SAT19, and the Cys6-type zinc finger SAT20, the latter being probably involved in regulation of SC3 expression. This Stachybotrys chartarum (strain CBS 109288 / IBT 7711) (Toxic black mold) protein is Acetyltransferase.